A 242-amino-acid chain; its full sequence is ATP synthase subunit 4, mitochondrial (242 aa).

A mitochondrion-targeting transit peptide spans 1–35 (MSFRALTMRSAVARTALNNTIRSARVATPYLGIRH).

It belongs to the eukaryotic ATPase B chain family. F-type ATPases have 2 components, CF(1) - the catalytic core - and CF(0) - the membrane proton channel. In yeast, the dimeric form of ATP synthase consists of 17 polypeptides: alpha, beta, gamma, delta, epsilon, 4 (B), 5 (OSCP), 6 (A), 8, 9 (C), d, E (Tim11), f, g, h, i/j and k.

It is found in the mitochondrion. It localises to the mitochondrion inner membrane. Its function is as follows. Mitochondrial membrane ATP synthase (F(1)F(0) ATP synthase or Complex V) produces ATP from ADP in the presence of a proton gradient across the membrane which is generated by electron transport complexes of the respiratory chain. F-type ATPases consist of two structural domains, F(1) - containing the extramembraneous catalytic core, and F(0) - containing the membrane proton channel, linked together by a central stalk and a peripheral stalk. During catalysis, ATP synthesis in the catalytic domain of F(1) is coupled via a rotary mechanism of the central stalk subunits to proton translocation. Part of the complex F(0) domain and the peripheric stalk, which acts as a stator to hold the catalytic alpha(3)beta(3) subcomplex and subunit a/ATP6 static relative to the rotary elements. The chain is ATP synthase subunit 4, mitochondrial (ATP4) from Candida glabrata (strain ATCC 2001 / BCRC 20586 / JCM 3761 / NBRC 0622 / NRRL Y-65 / CBS 138) (Yeast).